A 519-amino-acid chain; its full sequence is MVLEPQIKSQLNQYLQLMEGDVLLKVSAGNDKVSEDMLSLVDELASMSSRITVEKTNLERTPSFSVNRPGEDTGIVFAGIPLGHEFTSLVLALLQVSGRAPKAEQNVIDQIKNIEGEYHFESYISLSCQNCPDVVQALNLMSVLNPGISHTMIDGAAFKDEVESKDIMAVPTVYLNGESFTSGRMTVEEILAQLGSGPDASELADKDPFDVLVVGGGPAGASSAIYAARKGIRTGIVADRFGGQIMDTLSIENFISQKYTEGPKLAASLEEHVKEYDIDVMKLQRAKRLEKKDLIEIELENGAVLKSKSVILSTGARWRNVGVPGEQEFKNKGVAYCPHCDGPLFEGKDVAVIGGGNSGVEAAIDLAGIVNHVTVLEFMPELKADEVLQERLNSLPNVTVIKNAQTKEITGDDKVNGISYMDRDTEEVHHIELAGVFVQIGLVPNTDWLDGTLERNRFGEIVVDSHGATNVPGVFAAGDCTNSAYKQIIISMGSGATAALGAFDYLIRNTTPAESAAAK.

Positions 1-183 are membrane-binding; the sequence is MVLEPQIKSQ…YLNGESFTSG (183 aa). Residues 184-519 are catalytic; sequence RMTVEEILAQ…TTPAESAAAK (336 aa). FAD is bound at residue 210–241; that stretch reads DVLVVGGGPAGASSAIYAARKGIRTGIVADRF. The cysteines at positions 337 and 340 are disulfide-linked. Residue 349–379 coordinates NAD(+); sequence DVAVIGGGNSGVEAAIDLAGIVNHVTVLEFM. Position 469 to 479 (469 to 479) interacts with FAD; the sequence is TNVPGVFAAGD.

This sequence belongs to the class-II pyridine nucleotide-disulfide oxidoreductase family. In terms of assembly, homodimer. FAD serves as cofactor.

Its subcellular location is the cell membrane. The catalysed reaction is a ubiquinone + NADH + 5 H(+)(in) = a ubiquinol + NAD(+) + 4 H(+)(out). In terms of biological role, transfer of electrons from NADH to the respiratory chain. The immediate electron acceptor for the enzyme is believed to be ubiquinone. The protein is NADH dehydrogenase (ahpF) of Ferdinandcohnia aciditolerans (strain JCM 32973 / CCTCC AB 2017280 / YN-1) (Bacillus aciditolerans).